Here is a 412-residue protein sequence, read N- to C-terminus: Adenosine receptor A2a (412 aa).

Topologically, residues 1–7 (MSTMGSW) are extracellular. The chain crosses the membrane as a helical span at residues 8–32 (VYITVELAIAVLAILGNVLVCWAVW). Residues 33–42 (LNSNLQNVTN) lie on the Cytoplasmic side of the membrane. Residues 43–66 (YFVVSLAAADIAVGVLAIPFAITI) form a helical membrane-spanning segment. Residues 67 to 77 (STGFCAACHNC) lie on the Extracellular side of the membrane. Intrachain disulfides connect Cys-71-Cys-159, Cys-74-Cys-146, and Cys-77-Cys-166. The chain crosses the membrane as a helical span at residues 78-100 (LFFACFVLVLTQSSIFSLLAIAI). The Cytoplasmic segment spans residues 101 to 120 (DRYIAIRIPLRYNGLVTGTR). A helical membrane pass occupies residues 121–143 (AKGIIAVCWVLSFAIGLTPMLGW). Topologically, residues 144-173 (NNCSQPKEGRNYSQGCGEGQVACLFEDVVP) are extracellular. N-linked (GlcNAc...) asparagine glycosylation is found at Asn-145 and Asn-154. An adenosine-binding site is contributed by Glu-169. The chain crosses the membrane as a helical span at residues 174 to 198 (MNYMVYYNFFAFVLVPLLLMLGVYL). Over 199-234 (RIFLAARRQLKQMESQPLPGERARSTLQKEVHAAKS) the chain is Cytoplasmic. The chain crosses the membrane as a helical span at residues 235-258 (LAIIVGLFALCWLPLHIINCFTFF). Residue Asn-253 participates in adenosine binding. A disulfide bond links Cys-259 and Cys-262. At 259-266 (CPECSHAP) the chain is on the extracellular side. The chain crosses the membrane as a helical span at residues 267–290 (LWLMYLTIVLSHTNSVVNPFIYAY). Ser-277 and His-278 together coordinate adenosine. Residues 291-412 (RIREFRQTFR…PLAQDGAGVS (122 aa)) lie on the Cytoplasmic side of the membrane. The interval 392 to 412 (GACPESPGLEGPLAQDGAGVS) is disordered.

The protein belongs to the G-protein coupled receptor 1 family. Interacts (via cytoplasmic C-terminal domain) with USP4; the interaction is direct. May interact with DRD4. Interacts with NECAB2. Interacts (via cytoplasmic C-terminal domain) with GAS2L2; interaction enhances receptor-mediated adenylyl cyclase activity. Post-translationally, ubiquitinated. Deubiquitinated by USP4; leading to stabilization and expression at the cell surface.

The protein resides in the cell membrane. Its function is as follows. Receptor for adenosine. The activity of this receptor is mediated by G proteins which activate adenylyl cyclase. This chain is Adenosine receptor A2a (ADORA2A), found in Canis lupus familiaris (Dog).